The chain runs to 349 residues: Quinone oxidoreductase-like protein 1 (349 aa).

It belongs to the zinc-containing alcohol dehydrogenase family. Quinone oxidoreductase subfamily. In terms of assembly, homodimer. Component of the FERRY complex composed of five subunits, TBCK, PPP1R21, FERRY3, CRYZL1 and GATD1 with a ratio of 1:2:1:2:4, respectively. Ubiquitous.

It is found in the early endosome. Component of the FERRY complex (Five-subunit Endosomal Rab5 and RNA/ribosome intermediary). The FERRY complex directly interacts with mRNAs and RAB5A, and functions as a RAB5A effector involved in the localization and the distribution of specific mRNAs most likely by mediating their endosomal transport. The complex recruits mRNAs and ribosomes to early endosomes through direct mRNA-interaction. This chain is Quinone oxidoreductase-like protein 1 (CRYZL1), found in Homo sapiens (Human).